A 1075-amino-acid chain; its full sequence is Protein nervous wreck (1075 aa).

The F-BAR domain occupies 11–289 (VKFLKNLHTE…QAQQLTREYN (279 aa)). Disordered regions lie at residues 361 to 381 (LRDS…LDTK) and 431 to 536 (SASS…DEPI). The span at 431 to 453 (SASSISMRTDASGQGENPSSDSF) shows a compositional bias: polar residues. Positions 469 to 482 (PKQEQQLSRDRTFS) are enriched in basic and acidic residues. Over residues 493-512 (SAAAASSAAAASSSMMASSA) the composition is skewed to low complexity. SH3 domains are found at residues 542–603 (EAIF…IDQE) and 658–721 (SDVE…ECDE). Disordered stretches follow at residues 722 to 747 (MGEP…LPPA), 769 to 837 (SQDT…EKGA), and 864 to 917 (GADK…EGNA). Composition is skewed to pro residues over residues 733 to 747 (SPPP…LPPA) and 809 to 818 (QPPPSLPPPQ). Low complexity predominate over residues 819–837 (LAKAGGSAPGSGSKVEKGA). Over residues 883–897 (VSKEQPAEVAKKPDI) the composition is skewed to basic and acidic residues.

In terms of assembly, homodimer. Interacts (via SH3 domain 1) with WASp. Interacts (via SH3 domain 1) with shi/dynamin. Interacts (via SH3 domain 2) with Dap160. Interacts (via F-BAR domain) with SH3PX1. Interacts (via SH3 domain 2) with Snx16. Identified in a complex with Syn and Syt1. As to expression, detected in larval body wall muscle. Detected at the neuromuscular junction, on motoneuron axons and axon terminals, at synaptic boutons in the periactive zone surrounding the synapse (at protein level). Detected on motoneuron axons and axon terminals, at synaptic boutons in the periactive zone surrounding the synapse.

The protein resides in the endomembrane system. It localises to the synapse. The protein localises to the cell projection. It is found in the axon. Its subcellular location is the presynaptic cell membrane. The protein resides in the cytoplasmic vesicle. It localises to the secretory vesicle. The protein localises to the synaptic vesicle. It is found in the recycling endosome. Its function is as follows. Adapter protein that provides a link between vesicular membrane traffic and the actin assembly machinery. Acts together with Cdc42 to stimulate actin nucleation mediated by WASp and the ARP2/3 complex. Binds to membranes enriched in phosphatidylinositol 4,5-bisphosphate and causes local membrane deformation. Required for normal structure and function of synapses at the neuromuscular junction. Plays a role in synaptic vesicle trafficking. Required for the release of a normal number of synaptic vesicles per action potential. The sequence is that of Protein nervous wreck from Drosophila melanogaster (Fruit fly).